A 431-amino-acid polypeptide reads, in one-letter code: Transcription factor Sp7 (431 aa).

The interval S30–A56 is disordered. K41 and K45 each carry N6-propionyllysine. K58 participates in a covalent cross-link: Glycyl lysine isopeptide (Lys-Gly) (interchain with G-Cter in ubiquitin). 2 disordered regions span residues T71–G115 and T154–Y260. Positions T156 to G164 match the 9aaTAD motif. Residues N166–L178 are compositionally biased toward gly residues. A Glycyl lysine isopeptide (Lys-Gly) (interchain with G-Cter in ubiquitin) cross-link involves residue K230. 3 C2H2-type zinc fingers span residues H294 to H318, F324 to H348, and F354 to H376. Residues K361 and K371 each carry the N6-propionyllysine modification. The tract at residues D367–I431 is disordered. A compositionally biased stretch (polar residues) spans S403–P412.

This sequence belongs to the Sp1 C2H2-type zinc-finger protein family. As to quaternary structure, interacts with RIOX1; the interaction is direct and inhibits transcription activator activity. In terms of processing, ubiquitination at leads to proteasomal degradation. SP7 is a short-live protein with an endogenous half-life of approximately 12 hours. Propionylated. Depropionylation at Lys-371 by SIRT7 activates transcription factor activity and positively regulates bone formation by osteoblasts. As to expression, restricted to bone-derived cell.

The protein resides in the nucleus. Its function is as follows. Transcriptional activator essential for osteoblast differentiation. Binds to SP1 and EKLF consensus sequences and to other G/C-rich sequences. The protein is Transcription factor Sp7 (SP7) of Homo sapiens (Human).